We begin with the raw amino-acid sequence, 706 residues long: Elongation factor G (706 aa).

Residues 15–291 (LKTRNIGISA…GVLDYLASPV (277 aa)) enclose the tr-type G domain. GTP is bound by residues 24–31 (AHIDSGKT), 91–95 (DTPGH), and 145–148 (NKLD).

It belongs to the TRAFAC class translation factor GTPase superfamily. Classic translation factor GTPase family. EF-G/EF-2 subfamily.

The protein resides in the cytoplasm. In terms of biological role, catalyzes the GTP-dependent ribosomal translocation step during translation elongation. During this step, the ribosome changes from the pre-translocational (PRE) to the post-translocational (POST) state as the newly formed A-site-bound peptidyl-tRNA and P-site-bound deacylated tRNA move to the P and E sites, respectively. Catalyzes the coordinated movement of the two tRNA molecules, the mRNA and conformational changes in the ribosome. This is Elongation factor G from Leptospira interrogans serogroup Icterohaemorrhagiae serovar copenhageni (strain Fiocruz L1-130).